A 313-amino-acid polypeptide reads, in one-letter code: Acetyl-coenzyme A carboxylase carboxyl transferase subunit alpha (313 aa).

Positions 36-286 (RLDKEVKTIY…KEYFLDTLRT (251 aa)) constitute a CoA carboxyltransferase C-terminal domain.

It belongs to the AccA family. As to quaternary structure, acetyl-CoA carboxylase is a heterohexamer composed of biotin carboxyl carrier protein (AccB), biotin carboxylase (AccC) and two subunits each of ACCase subunit alpha (AccA) and ACCase subunit beta (AccD).

The protein resides in the cytoplasm. It catalyses the reaction N(6)-carboxybiotinyl-L-lysyl-[protein] + acetyl-CoA = N(6)-biotinyl-L-lysyl-[protein] + malonyl-CoA. It participates in lipid metabolism; malonyl-CoA biosynthesis; malonyl-CoA from acetyl-CoA: step 1/1. Its function is as follows. Component of the acetyl coenzyme A carboxylase (ACC) complex. First, biotin carboxylase catalyzes the carboxylation of biotin on its carrier protein (BCCP) and then the CO(2) group is transferred by the carboxyltransferase to acetyl-CoA to form malonyl-CoA. This Helicobacter acinonychis (strain Sheeba) protein is Acetyl-coenzyme A carboxylase carboxyl transferase subunit alpha.